The chain runs to 655 residues: Methylenetetrahydrofolate reductase (NADPH) (655 aa).

Residues 1-39 (MVNEPRGNGSPGPRWEGSSSGSESSRTSSRCSTPGLDPE) form a disordered region. Residues S10, S18, S19, S20, S22, S24, S25, S28, and S29 each carry the phosphoserine modification. The segment covering 11–35 (PGPRWEGSSSGSESSRTSSRCSTPG) has biased composition (low complexity). The residue at position 33 (T33) is a Phosphothreonine. E62 functions as the Proton donor/acceptor in the catalytic mechanism. NAD(+) is bound by residues 62 to 67 (EFFPPR) and 93 to 94 (TW). Residue T93 is modified to Phosphothreonine. 93–94 (TW) serves as a coordination point for FAD. S102 is subject to Phosphoserine. FAD contacts are provided by residues H126, 156–158 (RGD), 173–174 (YA), Y196, 200–203 (HPEG), D209, and K216. A substrate-binding site is contributed by D158. Substrate is bound by residues Q227, Y320, and R324. S393 is subject to Phosphoserine. At T450 the chain carries Phosphothreonine. Residues N455, 460–463 (AAET), 480–484 (TINSQ), T559, and T572 each bind S-adenosyl-L-methionine.

It belongs to the methylenetetrahydrofolate reductase family. As to quaternary structure, homodimer. FAD serves as cofactor. Phosphorylation of an N-terminal serine-rich phosphorylation region increases sensitivity to S-adenosylmethionine and inhibition.

The enzyme catalyses (6S)-5-methyl-5,6,7,8-tetrahydrofolate + NADP(+) = (6R)-5,10-methylene-5,6,7,8-tetrahydrofolate + NADPH + H(+). It functions in the pathway one-carbon metabolism; tetrahydrofolate interconversion. Allosterically regulated by S-adenosylmethionine (SAM). Catalyzes the conversion of 5,10-methylenetetrahydrofolate to 5-methyltetrahydrofolate, a cosubstrate for homocysteine remethylation to methionine. Represents a key regulatory connection between the folate and methionine cycles. In Bos taurus (Bovine), this protein is Methylenetetrahydrofolate reductase (NADPH) (MTHFR).